The chain runs to 431 residues: Putative serine/threonine-protein kinase B (431 aa).

The Protein kinase domain occupies Y20–I279. Residues V26–G34 and K49 each bind ATP. Residue D147 is the Proton acceptor of the active site. The PH domain occupies D331–G429.

This sequence belongs to the protein kinase superfamily. Ser/Thr protein kinase family.

It carries out the reaction L-seryl-[protein] + ATP = O-phospho-L-seryl-[protein] + ADP + H(+). It catalyses the reaction L-threonyl-[protein] + ATP = O-phospho-L-threonyl-[protein] + ADP + H(+). The protein is Putative serine/threonine-protein kinase B (NRKB) of Trypanosoma brucei brucei.